The sequence spans 65 residues: Disintegrin CC8B (65 aa).

The Disintegrin domain occupies 1–65 (NSAHPCCDPV…DCPRNPWHKS (65 aa)). Disulfide bonds link Cys6–Cys29, Cys20–Cys26, Cys25–Cys50, and Cys38–Cys57. Residues 42–44 (WGD) carry the Cell attachment site; atypical (WGD) motif.

This sequence belongs to the disintegrin family. Dimeric disintegrin subfamily. Heterodimer with CC8A; disulfide-linked. Expressed by the venom gland.

The protein localises to the secreted. Functionally, inhibits integrins alpha-IIb/beta-3 (ITGA2B/ITGB3), alpha-V/beta-3 (ITGAV/ITGB3), and alpha-5/beta-1 (ITGA5/ITGB1). This is Disintegrin CC8B from Cerastes cerastes (Horned desert viper).